A 68-amino-acid polypeptide reads, in one-letter code: Large ribosomal subunit protein uL29 (68 aa).

Belongs to the universal ribosomal protein uL29 family.

This chain is Large ribosomal subunit protein uL29, found in Leuconostoc citreum (strain KM20).